The following is a 159-amino-acid chain: NADH-quinone oxidoreductase subunit B (159 aa).

4 residues coordinate [4Fe-4S] cluster: C37, C38, C102, and C132.

This sequence belongs to the complex I 20 kDa subunit family. In terms of assembly, NDH-1 is composed of 14 different subunits. Subunits NuoB, C, D, E, F, and G constitute the peripheral sector of the complex. Requires [4Fe-4S] cluster as cofactor.

The protein resides in the cell inner membrane. It catalyses the reaction a quinone + NADH + 5 H(+)(in) = a quinol + NAD(+) + 4 H(+)(out). Functionally, NDH-1 shuttles electrons from NADH, via FMN and iron-sulfur (Fe-S) centers, to quinones in the respiratory chain. Couples the redox reaction to proton translocation (for every two electrons transferred, four hydrogen ions are translocated across the cytoplasmic membrane), and thus conserves the redox energy in a proton gradient. This is NADH-quinone oxidoreductase subunit B from Paraburkholderia phymatum (strain DSM 17167 / CIP 108236 / LMG 21445 / STM815) (Burkholderia phymatum).